The following is a 109-amino-acid chain: Movement protein TGB2 (109 aa).

The Cytoplasmic segment spans residues 1–9; that stretch reads MPLTPPPDF. A helical transmembrane segment spans residues 10-30; the sequence is TKVYLSAALGVSLALVVWLLI. Over 31–72 the chain is Lumenal; the sequence is RSTLPVVGDRDHNLPHGGWYRDGTKSVFYNSPGRLNSIEARK. A helical membrane pass occupies residues 73-93; that stretch reads APLLGQPWAIVVLLVLLIWAS. Topologically, residues 94-109 are cytoplasmic; it reads HKLGRPNCRACAGSHT.

This sequence belongs to the Tymovirales TGBp2 protein family.

The protein resides in the host endoplasmic reticulum membrane. In terms of biological role, plays a role in viral cell-to-cell propagation, by facilitating genome transport to neighboring plant cells through plasmosdesmata,. The chain is Movement protein TGB2 from Solanum tuberosum (Potato).